The primary structure comprises 267 residues: Phosphonates import ATP-binding protein PhnC 1 (267 aa).

An ABC transporter domain is found at 3-247 (LSLDGVDLVH…ALDALYANEQ (245 aa)). Residue 36 to 43 (GPSGAGKT) coordinates ATP.

It belongs to the ABC transporter superfamily. Phosphonates importer (TC 3.A.1.9.1) family. As to quaternary structure, the complex is composed of two ATP-binding proteins (PhnC), two transmembrane proteins (PhnE) and a solute-binding protein (PhnD).

It is found in the cell inner membrane. It carries out the reaction phosphonate(out) + ATP + H2O = phosphonate(in) + ADP + phosphate + H(+). Part of the ABC transporter complex PhnCDE involved in phosphonates import. Responsible for energy coupling to the transport system. This is Phosphonates import ATP-binding protein PhnC 1 from Pseudomonas aeruginosa (strain ATCC 15692 / DSM 22644 / CIP 104116 / JCM 14847 / LMG 12228 / 1C / PRS 101 / PAO1).